We begin with the raw amino-acid sequence, 741 residues long: Fibrinogen alpha chain (741 aa).

The first 18 residues, 1–18 (MIPVTILCVLLCLNLAWA), serve as a signal peptide directing secretion. Gln-19 carries the pyrrolidone carboxylic acid modification. Positions 67–506 (CCRMQGIIDD…STRRSYNGKD (440 aa)) form a coiled coil. A disordered region spans residues 270–307 (VAEARGDSSPSHTGKLITSSHRRESPSLVDKTSSASSV). Residues 277-288 (SSPSHTGKLITS) are compositionally biased toward polar residues. Cys-310 and Cys-341 are disulfide-bonded. Low complexity-rich tracts occupy residues 381-398 (STSS…HVTG) and 435-449 (SASH…SSSS). The interval 381–510 (STSSRHSIGS…SYNGKDCDDI (130 aa)) is disordered. Residues 450-459 (FNKGGSTFET) show a composition bias toward polar residues. Residues 498–739 (TRRSYNGKDC…VVRMKIRPLE (242 aa)) enclose the Fibrinogen C-terminal domain. Asp-666, Asp-668, Trp-670, and Glu-672 together coordinate Ca(2+). Residues Cys-674 and Cys-687 are joined by a disulfide bond.

As to quaternary structure, heterohexamer; disulfide linked. Contains 2 sets of 3 non-identical chains (alpha, beta and gamma). The 2 heterotrimers are in head to head conformation with the N-termini in a small central domain. In terms of processing, conversion of fibrinogen to fibrin is triggered by thrombin, which cleaves fibrinopeptides A and B from alpha and beta chains, and thus exposes the N-terminal polymerization sites responsible for the formation of the soft clot. The soft clot is converted into the hard clot by factor XIIIA which catalyzes the epsilon-(gamma-glutamyl)lysine cross-linking between gamma chains (stronger) and between alpha chains (weaker) of different monomers. Post-translationally, forms F13A-mediated cross-links between a glutamine and the epsilon-amino group of a lysine residue, forming fibronectin-fibrinogen heteropolymers.

The protein resides in the secreted. Its function is as follows. Cleaved by the protease thrombin to yield monomers which, together with fibrinogen beta (FGB) and fibrinogen gamma (FGG), polymerize to form an insoluble fibrin matrix. Fibrin has a major function in hemostasis as one of the primary components of blood clots. The chain is Fibrinogen alpha chain (FGA) from Gallus gallus (Chicken).